Consider the following 547-residue polypeptide: Dihydrolipoyllysine-residue acetyltransferase component of pyruvate dehydrogenase complex (547 aa).

The Lipoyl-binding 1 domain occupies S2–E75. N6-lipoyllysine is present on K41. Residues E75–A117 are disordered. Over residues E80 to A117 the composition is skewed to low complexity. The Lipoyl-binding 2 domain maps to V119–K193. Position 159 is an N6-lipoyllysine (K159). The segment covering E202–A231 has biased composition (low complexity). The disordered stretch occupies residues E202–H248. A Peripheral subunit-binding (PSBD) domain is found at H248–V285. H520 is a catalytic residue.

Belongs to the 2-oxoacid dehydrogenase family. As to quaternary structure, forms a 24-polypeptide structural core with octahedral symmetry. (R)-lipoate serves as cofactor.

It carries out the reaction N(6)-[(R)-dihydrolipoyl]-L-lysyl-[protein] + acetyl-CoA = N(6)-[(R)-S(8)-acetyldihydrolipoyl]-L-lysyl-[protein] + CoA. Functionally, the pyruvate dehydrogenase complex catalyzes the overall conversion of pyruvate to acetyl-CoA and CO(2). It contains multiple copies of three enzymatic components: pyruvate dehydrogenase (E1), dihydrolipoamide acetyltransferase (E2) and lipoamide dehydrogenase (E3). The sequence is that of Dihydrolipoyllysine-residue acetyltransferase component of pyruvate dehydrogenase complex (aceF) from Pseudomonas aeruginosa (strain ATCC 15692 / DSM 22644 / CIP 104116 / JCM 14847 / LMG 12228 / 1C / PRS 101 / PAO1).